Reading from the N-terminus, the 734-residue chain is Photosystem I P700 chlorophyll a apoprotein A2 (734 aa).

8 consecutive transmembrane segments (helical) span residues 46 to 69 (IFASHFGHLAIIFLWTSGNLFHVA), 135 to 158 (LYSGSIFLLILASVMLFAGWLHLQ), 175 to 199 (LNHHLSGLFGFSSVAWSGHLIHVAI), 273 to 291 (IAHHHLAIGVIFIFAGHMY), 330 to 353 (LHFQLGLALASLGVITSLVAQHMY), 369 to 395 (AALYTHHQYIAGFLMVGAFAHGAIFFV), 417 to 439 (AIISHLSWVSLFLGFHTLGLYVH), and 517 to 535 (FLVHHAIALALHTTTLILV). Residues Cys559 and Cys568 each contribute to the [4Fe-4S] cluster site. 2 consecutive transmembrane segments (helical) span residues 575–596 (AFYLSMFWMLNTIGWVTFYWHW) and 643–665 (LSVWAWMFLFGHLIWATGFMFLI). Residues His654, Met662, and Tyr670 each coordinate chlorophyll a. A phylloquinone-binding site is contributed by Trp671. The helical transmembrane segment at 707–727 (LVGLVHFTVGYIFTYAAFVIA) threads the bilayer.

Belongs to the PsaA/PsaB family. The PsaA/B heterodimer binds the P700 chlorophyll special pair and subsequent electron acceptors. PSI consists of a core antenna complex that captures photons, and an electron transfer chain that converts photonic excitation into a charge separation. The eukaryotic PSI reaction center is composed of at least 11 subunits. P700 is a chlorophyll a/chlorophyll a' dimer, A0 is one or more chlorophyll a, A1 is one or both phylloquinones and FX is a shared 4Fe-4S iron-sulfur center. serves as cofactor.

It localises to the plastid. The protein resides in the chloroplast thylakoid membrane. The catalysed reaction is reduced [plastocyanin] + hnu + oxidized [2Fe-2S]-[ferredoxin] = oxidized [plastocyanin] + reduced [2Fe-2S]-[ferredoxin]. Functionally, psaA and PsaB bind P700, the primary electron donor of photosystem I (PSI), as well as the electron acceptors A0, A1 and FX. PSI is a plastocyanin/cytochrome c6-ferredoxin oxidoreductase, converting photonic excitation into a charge separation, which transfers an electron from the donor P700 chlorophyll pair to the spectroscopically characterized acceptors A0, A1, FX, FA and FB in turn. Oxidized P700 is reduced on the lumenal side of the thylakoid membrane by plastocyanin or cytochrome c6. The protein is Photosystem I P700 chlorophyll a apoprotein A2 of Guillardia theta (Cryptophyte).